Consider the following 38-residue polypeptide: uncharacterized protein (38 aa).

It belongs to the asfivirus C84L family.

This is an uncharacterized protein from Ornithodoros (relapsing fever ticks).